Reading from the N-terminus, the 431-residue chain is Xaa-Arg dipeptidase (431 aa).

Belongs to the peptidase M20A family.

It catalyses the reaction beta-alanyl-L-lysine + H2O = beta-alanine + L-lysine. The catalysed reaction is beta-alanyl-L-arginine + H2O = beta-alanine + L-arginine. The enzyme catalyses beta-alanyl-L-ornithine + H2O = beta-alanine + L-ornithine. It carries out the reaction N(2)-(4-aminobutanoyl)-L-lysine + H2O = 4-aminobutanoate + L-lysine. It catalyses the reaction N(2)-(4-aminobutanoyl)-L-arginine + H2O = 4-aminobutanoate + L-arginine. The catalysed reaction is N(2)-(4-aminobutanoyl)-L-ornithine + H2O = 4-aminobutanoate + L-ornithine. Functionally, catalyzes the peptide bond hydrolysis in dipeptides having basic amino acids lysine, ornithine or arginine at C-terminus. Postulated to function in a metabolite repair mechanism by eliminating alternate dipeptide by-products formed during carnosine synthesis. The protein is Xaa-Arg dipeptidase of Mus musculus (Mouse).